A 484-amino-acid chain; its full sequence is Ribosomal protein uS12 methylthiotransferase RimO (484 aa).

The region spanning 8–119 (RRVAMVTLGC…LAERLDDVLA (112 aa)) is the MTTase N-terminal domain. C17, C53, C82, C184, C188, and C191 together coordinate [4Fe-4S] cluster. In terms of domain architecture, Radical SAM core spans 170-401 (LDDSPLAALK…ALADELVAQR (232 aa)). Residues 403-469 (EDRVGTEVRV…GVDLVVRPVG (67 aa)) form the TRAM domain.

The protein belongs to the methylthiotransferase family. RimO subfamily. [4Fe-4S] cluster is required as a cofactor.

It localises to the cytoplasm. The enzyme catalyses L-aspartate(89)-[ribosomal protein uS12]-hydrogen + (sulfur carrier)-SH + AH2 + 2 S-adenosyl-L-methionine = 3-methylsulfanyl-L-aspartate(89)-[ribosomal protein uS12]-hydrogen + (sulfur carrier)-H + 5'-deoxyadenosine + L-methionine + A + S-adenosyl-L-homocysteine + 2 H(+). Functionally, catalyzes the methylthiolation of an aspartic acid residue of ribosomal protein uS12. The chain is Ribosomal protein uS12 methylthiotransferase RimO from Saccharopolyspora erythraea (strain ATCC 11635 / DSM 40517 / JCM 4748 / NBRC 13426 / NCIMB 8594 / NRRL 2338).